A 21-amino-acid chain; its full sequence is Buforin-2 (21 aa).

Residue Lys21 is modified to N6-(2-hydroxyisobutyryl)lysine; alternate.

It belongs to the histone H2A family. In terms of tissue distribution, expressed by the skin glands.

The protein resides in the secreted. Functionally, antimicrobial peptide with potent activity against some Gram-positive and Gram-negative bacteria. Does not permeabilize membrane, but internalizes into bacterial cells and alter specific gene expression involved in bacterial resistance mechanisms. Has the ability to agglutinate E.coli, and lipid vesicles. Shows a weak hemolytic activity, and is not cytotoxic to monocytes. In Sphaenorhynchus lacteus (Orinoco lime treefrog), this protein is Buforin-2.